Here is a 307-residue protein sequence, read N- to C-terminus: NAD(+) hydrolase TcpC (307 aa).

The chain crosses the membrane as a helical span at residues 22 to 42; that stretch reads YNILFFIFLSIAIPFLLFLAW. Positions 169–303 constitute a TIR domain; it reads THYDFFISHA…EIARELAEIA (135 aa). NAD(+)-binding positions include 178-179 and glutamate 208; that span reads AK. The active site involves glutamate 244.

In terms of assembly, interacts with host MYD88. Interacts with host TLR4.

It localises to the secreted. The protein resides in the membrane. The enzyme catalyses NAD(+) + H2O = ADP-D-ribose + nicotinamide + H(+). It carries out the reaction NADP(+) + H2O = ADP-D-ribose 2'-phosphate + nicotinamide + H(+). Virulence factor that suppresses host Toll-like receptor (TLR)-mediated cytokine production upon infection, thereby increasing bacterial burden in the urinary tract and promoting renal tissue damage. Acts as a NAD(+) hydrolase (NADase) by catalyzing cleavage of NAD(+) into ADP-D-ribose (ADPR) and nicotinamide. Also able to hydrolyze NADP(+), but not other NAD(+)-related molecules. The chain is NAD(+) hydrolase TcpC from Escherichia coli O6:H1 (strain CFT073 / ATCC 700928 / UPEC).